Consider the following 346-residue polypeptide: Putative D-alanine--D-lactate ligase (346 aa).

Residues Y137–S338 enclose the ATP-grasp domain. R163 to G216 serves as a coordination point for ATP. D292, E305, and N307 together coordinate Mg(2+).

This sequence belongs to the D-alanine--D-alanine ligase family. Requires Mg(2+) as cofactor. Mn(2+) is required as a cofactor.

It is found in the cell membrane. In terms of biological role, required for resistance to glycopeptides antibiotics. D-Ala--D-Ala ligase of altered specificity which catalyzes ester bond formation between D-Ala and various D-hydroxy acids; producing a peptidoglycan which does not terminate by D-alanine but by D-lactate, thus preventing vancomycin binding. This Streptomyces coelicolor (strain ATCC BAA-471 / A3(2) / M145) protein is Putative D-alanine--D-lactate ligase.